Reading from the N-terminus, the 358-residue chain is Isopentenyl-diphosphate delta-isomerase (358 aa).

12 to 13 (RK) is a binding site for substrate. FMN contacts are provided by residues 69-71 (AMT), Ser99, and Asn128. Gln158 contributes to the substrate binding site. Position 159 (Glu159) interacts with Mg(2+). FMN-binding positions include Lys190, Thr220, 267–269 (GIR), and 288–289 (AG).

Belongs to the IPP isomerase type 2 family. In terms of assembly, homooctamer. Dimer of tetramers. Requires FMN as cofactor. It depends on NADPH as a cofactor. Mg(2+) is required as a cofactor.

The protein resides in the cytoplasm. The catalysed reaction is isopentenyl diphosphate = dimethylallyl diphosphate. Functionally, involved in the biosynthesis of isoprenoids. Catalyzes the 1,3-allylic rearrangement of the homoallylic substrate isopentenyl (IPP) to its allylic isomer, dimethylallyl diphosphate (DMAPP). The polypeptide is Isopentenyl-diphosphate delta-isomerase (Listeria monocytogenes serotype 4a (strain HCC23)).